Reading from the N-terminus, the 411-residue chain is Glutamyl-tRNA reductase (411 aa).

Substrate-binding positions include 49–52 (TCNR), serine 99, 104–106 (ENE), and glutamine 110. Cysteine 50 acts as the Nucleophile in catalysis. An NADP(+)-binding site is contributed by 179–184 (GAGEAG).

The protein belongs to the glutamyl-tRNA reductase family. In terms of assembly, homodimer.

It catalyses the reaction (S)-4-amino-5-oxopentanoate + tRNA(Glu) + NADP(+) = L-glutamyl-tRNA(Glu) + NADPH + H(+). Its pathway is porphyrin-containing compound metabolism; protoporphyrin-IX biosynthesis; 5-aminolevulinate from L-glutamyl-tRNA(Glu): step 1/2. In terms of biological role, catalyzes the NADPH-dependent reduction of glutamyl-tRNA(Glu) to glutamate 1-semialdehyde (GSA). This is Glutamyl-tRNA reductase from Hyperthermus butylicus (strain DSM 5456 / JCM 9403 / PLM1-5).